The chain runs to 279 residues: Formamidopyrimidine-DNA glycosylase (279 aa).

Pro2 serves as the catalytic Schiff-base intermediate with DNA. Glu3 functions as the Proton donor in the catalytic mechanism. The Proton donor; for beta-elimination activity role is filled by Lys58. Positions 92, 111, and 153 each coordinate DNA. The FPG-type zinc finger occupies 238–272; sequence TVYGKEGQSCLSCSSTIIKTKHSGRSTFYCKTCQY. Arg262 functions as the Proton donor; for delta-elimination activity in the catalytic mechanism.

It belongs to the FPG family. Monomer. Requires Zn(2+) as cofactor.

The enzyme catalyses Hydrolysis of DNA containing ring-opened 7-methylguanine residues, releasing 2,6-diamino-4-hydroxy-5-(N-methyl)formamidopyrimidine.. The catalysed reaction is 2'-deoxyribonucleotide-(2'-deoxyribose 5'-phosphate)-2'-deoxyribonucleotide-DNA = a 3'-end 2'-deoxyribonucleotide-(2,3-dehydro-2,3-deoxyribose 5'-phosphate)-DNA + a 5'-end 5'-phospho-2'-deoxyribonucleoside-DNA + H(+). In terms of biological role, involved in base excision repair of DNA damaged by oxidation or by mutagenic agents. Acts as a DNA glycosylase that recognizes and removes damaged bases. Has a preference for oxidized purines, such as 7,8-dihydro-8-oxoguanine (8-oxoG). Has AP (apurinic/apyrimidinic) lyase activity and introduces nicks in the DNA strand. Cleaves the DNA backbone by beta-delta elimination to generate a single-strand break at the site of the removed base with both 3'- and 5'-phosphates. This is Formamidopyrimidine-DNA glycosylase from Rickettsia massiliae (strain Mtu5).